A 692-amino-acid chain; its full sequence is Elongation factor G (692 aa).

One can recognise a tr-type G domain in the interval 8 to 282 (EKTRNIGIMA…AIVDYLPAPT (275 aa)). Residues 17–24 (AHIDAGKT), 81–85 (DTPGH), and 135–138 (NKMD) each bind GTP.

It belongs to the TRAFAC class translation factor GTPase superfamily. Classic translation factor GTPase family. EF-G/EF-2 subfamily.

Its subcellular location is the cytoplasm. Catalyzes the GTP-dependent ribosomal translocation step during translation elongation. During this step, the ribosome changes from the pre-translocational (PRE) to the post-translocational (POST) state as the newly formed A-site-bound peptidyl-tRNA and P-site-bound deacylated tRNA move to the P and E sites, respectively. Catalyzes the coordinated movement of the two tRNA molecules, the mRNA and conformational changes in the ribosome. The chain is Elongation factor G from Pelotomaculum thermopropionicum (strain DSM 13744 / JCM 10971 / SI).